We begin with the raw amino-acid sequence, 247 residues long: ATP synthase subunit a, chloroplastic (247 aa).

Transmembrane regions (helical) follow at residues 38–58, 95–115, 134–154, 199–219, and 220–240; these read QVLI…IIAV, VPFI…GALL, INTT…AGLT, LVVV…VMFL, and GLFT…AYIG.

It belongs to the ATPase A chain family. In terms of assembly, F-type ATPases have 2 components, CF(1) - the catalytic core - and CF(0) - the membrane proton channel. CF(1) has five subunits: alpha(3), beta(3), gamma(1), delta(1), epsilon(1). CF(0) has four main subunits: a, b, b' and c.

It is found in the plastid. The protein localises to the chloroplast thylakoid membrane. Functionally, key component of the proton channel; it plays a direct role in the translocation of protons across the membrane. The protein is ATP synthase subunit a, chloroplastic of Carica papaya (Papaya).